The following is a 441-amino-acid chain: 3-phosphoshikimate 1-carboxyvinyltransferase (441 aa).

Over residues 1–10 the composition is skewed to polar residues; sequence MSVTSTASSS. Residues 1–21 are disordered; it reads MSVTSTASSSRELRAGGGLSG. Residues K29, S30, and R34 each coordinate 3-phosphoshikimate. K29 serves as a coordination point for phosphoenolpyruvate. Residues G103 and R132 each contribute to the phosphoenolpyruvate site. 3-phosphoshikimate is bound by residues S177, Q179, D328, and K355. Residue Q179 coordinates phosphoenolpyruvate. The active-site Proton acceptor is the D328. The phosphoenolpyruvate site is built by R359 and R401.

The protein belongs to the EPSP synthase family. As to quaternary structure, monomer.

Its subcellular location is the cytoplasm. The enzyme catalyses 3-phosphoshikimate + phosphoenolpyruvate = 5-O-(1-carboxyvinyl)-3-phosphoshikimate + phosphate. It functions in the pathway metabolic intermediate biosynthesis; chorismate biosynthesis; chorismate from D-erythrose 4-phosphate and phosphoenolpyruvate: step 6/7. Its function is as follows. Catalyzes the transfer of the enolpyruvyl moiety of phosphoenolpyruvate (PEP) to the 5-hydroxyl of shikimate-3-phosphate (S3P) to produce enolpyruvyl shikimate-3-phosphate and inorganic phosphate. The protein is 3-phosphoshikimate 1-carboxyvinyltransferase of Prochlorococcus marinus (strain MIT 9303).